The chain runs to 153 residues: Superoxide dismutase [Cu-Zn] (153 aa).

Histidine 46, histidine 48, and histidine 63 together coordinate Cu cation. A disulfide bridge links cysteine 57 with cysteine 146. The tract at residues glycine 61–histidine 80 is disordered. Zn(2+) is bound by residues histidine 63, histidine 71, histidine 80, and aspartate 83. Residues glycine 68–histidine 80 are compositionally biased toward basic and acidic residues. Histidine 120 serves as a coordination point for Cu cation. Positions aspartate 124–lysine 136 are enriched in basic and acidic residues. The segment at aspartate 124–arginine 143 is disordered. Substrate is bound at residue arginine 143.

This sequence belongs to the Cu-Zn superoxide dismutase family. In terms of assembly, homodimer. Requires Cu cation as cofactor. It depends on Zn(2+) as a cofactor.

The protein resides in the cytoplasm. It carries out the reaction 2 superoxide + 2 H(+) = H2O2 + O2. Its function is as follows. Destroys radicals which are normally produced within the cells and which are toxic to biological systems. The chain is Superoxide dismutase [Cu-Zn] (sodC) from Aspergillus flavus.